The primary structure comprises 569 residues: Probable protein phosphatase 2C BIPP2C1 (569 aa).

Disordered regions lie at residues 166–212 (GSSN…SSKV) and 251–279 (SLDD…GSSI). Low complexity predominate over residues 174–183 (SEVGVESECG). The region spanning 329-564 (AAMLPHPSKV…DDVTVVVSVV (236 aa)) is the PPM-type phosphatase domain. Residues Asp-358, Gly-359, Asp-488, and Asp-555 each contribute to the Mn(2+) site.

It belongs to the PP2C family. Mg(2+) is required as a cofactor. Requires Mn(2+) as cofactor.

The catalysed reaction is O-phospho-L-seryl-[protein] + H2O = L-seryl-[protein] + phosphate. The enzyme catalyses O-phospho-L-threonyl-[protein] + H2O = L-threonyl-[protein] + phosphate. Its function is as follows. May play a role in responses to biotic and abiotic stresses. This Oryza sativa subsp. indica (Rice) protein is Probable protein phosphatase 2C BIPP2C1 (BIPP2C1).